We begin with the raw amino-acid sequence, 78 residues long: Exodeoxyribonuclease 7 small subunit (78 aa).

It belongs to the XseB family. Heterooligomer composed of large and small subunits.

The protein localises to the cytoplasm. The enzyme catalyses Exonucleolytic cleavage in either 5'- to 3'- or 3'- to 5'-direction to yield nucleoside 5'-phosphates.. Bidirectionally degrades single-stranded DNA into large acid-insoluble oligonucleotides, which are then degraded further into small acid-soluble oligonucleotides. This Psychromonas ingrahamii (strain DSM 17664 / CCUG 51855 / 37) protein is Exodeoxyribonuclease 7 small subunit.